The following is a 172-amino-acid chain: Centrin-2 (172 aa).

The segment at 1–31 (MASNFKKANMASTTQRKRMSPKPELTEEQKQ) is disordered. An N-acetylalanine modification is found at Ala-2. The interval 2–25 (ASNFKKANMASTTQRKRMSPKPEL) is required for self-assembly. Ser-20 is subject to Phosphoserine. A Glycyl lysine isopeptide (Lys-Gly) (interchain with G-Cter in SUMO2) cross-link involves residue Lys-22. Thr-26 carries the phosphothreonine modification. 4 EF-hand domains span residues 28 to 63 (EQKQ…LGFE), 64 to 99 (PKKE…KMSE), 101 to 136 (DTKE…LGEN), and 137 to 172 (LSDE…TSLY). Residues Asp-41, Asp-43, Thr-45, Thr-47, and Glu-52 each coordinate Ca(2+). Ca(2+) is bound by residues Asp-150, Asp-152, Asp-154, Glu-156, and Glu-161.

Belongs to the centrin family. In terms of assembly, monomer. Homooligomer. Interacts with CCP110, SFI1. Component of the XPC complex composed of XPC, RAD23B and CETN2. Component of the nuclear pore complex (NPC)-associated TREX-2 complex (transcription and export complex 2), composed of at least GANP, 2 copies of ENY2, PCID2, SEM1/DSS1, and either centrin CETN2 or centrin CETN3. The TREX-2 complex also associates with ALYREF/ALY and with the nucleoporin NUP153. Interacts with USP49. Forms a microtubule-associated complex with POC5, POC1B and FAM161A. Interacts with CCDC15.

It is found in the cytoplasm. It localises to the cytoskeleton. Its subcellular location is the microtubule organizing center. The protein localises to the centrosome. The protein resides in the centriole. It is found in the nucleus. It localises to the nucleus envelope. Its subcellular location is the nuclear pore complex. Functionally, plays a fundamental role in microtubule organizing center structure and function. Required for centriole duplication and correct spindle formation. Has a role in regulating cytokinesis and genome stability via cooperation with CALM1 and CCP110. Its function is as follows. Involved in global genome nucleotide excision repair (GG-NER) by acting as component of the XPC complex. Cooperatively with RAD23B appears to stabilize XPC. In vitro, stimulates DNA binding of the XPC:RAD23B dimer. The XPC complex is proposed to represent the first factor bound at the sites of DNA damage and together with other core recognition factors, XPA, RPA and the TFIIH complex, is part of the pre-incision (or initial recognition) complex. The XPC complex recognizes a wide spectrum of damaged DNA characterized by distortions of the DNA helix such as single-stranded loops, mismatched bubbles or single-stranded overhangs. The orientation of XPC complex binding appears to be crucial for inducing a productive NER. XPC complex is proposed to recognize and to interact with unpaired bases on the undamaged DNA strand which is followed by recruitment of the TFIIH complex and subsequent scanning for lesions in the opposite strand in a 5'-to-3' direction by the NER machinery. Cyclobutane pyrimidine dimers (CPDs) which are formed upon UV-induced DNA damage esacpe detection by the XPC complex due to a low degree of structural perurbation. Instead they are detected by the UV-DDB complex which in turn recruits and cooperates with the XPC complex in the respective DNA repair. In terms of biological role, as a component of the TREX-2 complex, involved in the export of mRNAs to the cytoplasm through the nuclear pores. This chain is Centrin-2 (CETN2), found in Bos taurus (Bovine).